The primary structure comprises 146 residues: 3-dehydroquinate dehydratase (146 aa).

The active-site Proton acceptor is the Y24. Residues N75, H81, and D88 each coordinate substrate. H101 functions as the Proton donor in the catalytic mechanism. Substrate contacts are provided by residues 102–103 (LS) and R112.

Belongs to the type-II 3-dehydroquinase family. As to quaternary structure, homododecamer.

The catalysed reaction is 3-dehydroquinate = 3-dehydroshikimate + H2O. It participates in metabolic intermediate biosynthesis; chorismate biosynthesis; chorismate from D-erythrose 4-phosphate and phosphoenolpyruvate: step 3/7. In terms of biological role, catalyzes a trans-dehydration via an enolate intermediate. This chain is 3-dehydroquinate dehydratase, found in Maricaulis maris (strain MCS10) (Caulobacter maris).